The primary structure comprises 272 residues: Cytosolic Fe-S cluster assembly factor NUBP2 (272 aa).

23 to 30 lines the ATP pocket; the sequence is GKGGVGKS. Residues Cys197 and Cys200 each contribute to the [4Fe-4S] cluster site.

Belongs to the Mrp/NBP35 ATP-binding proteins family. NUBP2/CFD1 subfamily. As to quaternary structure, heterotetramer of 2 NUBP1 and 2 NUBP2 chains. [4Fe-4S] cluster is required as a cofactor.

The protein resides in the cytoplasm. Functionally, component of the cytosolic iron-sulfur (Fe/S) protein assembly (CIA) machinery. Required for maturation of extramitochondrial Fe-S proteins. The NUBP1-NUBP2 heterotetramer forms a Fe-S scaffold complex, mediating the de novo assembly of an Fe-S cluster and its transfer to target apoproteins. The chain is Cytosolic Fe-S cluster assembly factor NUBP2 from Gallus gallus (Chicken).